Here is a 625-residue protein sequence, read N- to C-terminus: Interferon-induced GTP-binding protein Mx2 (625 aa).

The Dynamin-type G domain occupies 29–302; that stretch reads DLALPAIAVI…LVFHIGRCLP (274 aa). Positions 39-46 are G1 motif; the sequence is GDQSSGKS. 39 to 46 provides a ligand contact to GTP; it reads GDQSSGKS. The interval 64–66 is G2 motif; the sequence is VTR. A G3 motif region spans residues 140–143; the sequence is DLPG. GTP-binding positions include 140–144 and 209–212; these read DLPGI and TKPD. Residues 209–212 form a G4 motif region; the sequence is TKPD. The segment at 241–244 is G5 motif; that stretch reads RCRG. A GED domain is found at 539-625; that stretch reads REELTCHLKS…TEALKYLAKF (87 aa).

It belongs to the TRAFAC class dynamin-like GTPase superfamily. Dynamin/Fzo/YdjA family.

The protein localises to the cytoplasm. This chain is Interferon-induced GTP-binding protein Mx2 (mx2), found in Ictalurus punctatus (Channel catfish).